A 271-amino-acid polypeptide reads, in one-letter code: Putative phosphoenolpyruvate synthase regulatory protein (271 aa).

151–158 (GVSRSGKT) is a binding site for ADP.

The protein belongs to the pyruvate, phosphate/water dikinase regulatory protein family. PSRP subfamily.

The catalysed reaction is [pyruvate, water dikinase] + ADP = [pyruvate, water dikinase]-phosphate + AMP + H(+). It carries out the reaction [pyruvate, water dikinase]-phosphate + phosphate + H(+) = [pyruvate, water dikinase] + diphosphate. Bifunctional serine/threonine kinase and phosphorylase involved in the regulation of the phosphoenolpyruvate synthase (PEPS) by catalyzing its phosphorylation/dephosphorylation. The sequence is that of Putative phosphoenolpyruvate synthase regulatory protein from Burkholderia lata (strain ATCC 17760 / DSM 23089 / LMG 22485 / NCIMB 9086 / R18194 / 383).